The following is a 143-amino-acid chain: Nucleoside diphosphate kinase (143 aa).

Residues lysine 11, phenylalanine 59, arginine 87, threonine 93, arginine 104, and asparagine 114 each contribute to the ATP site. The active-site Pros-phosphohistidine intermediate is histidine 117.

The protein belongs to the NDK family. Homotetramer. It depends on Mg(2+) as a cofactor.

Its subcellular location is the cytoplasm. It catalyses the reaction a 2'-deoxyribonucleoside 5'-diphosphate + ATP = a 2'-deoxyribonucleoside 5'-triphosphate + ADP. The enzyme catalyses a ribonucleoside 5'-diphosphate + ATP = a ribonucleoside 5'-triphosphate + ADP. Its function is as follows. Major role in the synthesis of nucleoside triphosphates other than ATP. The ATP gamma phosphate is transferred to the NDP beta phosphate via a ping-pong mechanism, using a phosphorylated active-site intermediate. The sequence is that of Nucleoside diphosphate kinase from Clostridium perfringens (strain SM101 / Type A).